A 156-amino-acid polypeptide reads, in one-letter code: ATP synthase subunit b (156 aa).

Residues 5 to 25 (VTLIGQTVAFIIFVWFCMKFV) traverse the membrane as a helical segment.

This sequence belongs to the ATPase B chain family. F-type ATPases have 2 components, F(1) - the catalytic core - and F(0) - the membrane proton channel. F(1) has five subunits: alpha(3), beta(3), gamma(1), delta(1), epsilon(1). F(0) has three main subunits: a(1), b(2) and c(10-14). The alpha and beta chains form an alternating ring which encloses part of the gamma chain. F(1) is attached to F(0) by a central stalk formed by the gamma and epsilon chains, while a peripheral stalk is formed by the delta and b chains.

It is found in the cell inner membrane. In terms of biological role, f(1)F(0) ATP synthase produces ATP from ADP in the presence of a proton or sodium gradient. F-type ATPases consist of two structural domains, F(1) containing the extramembraneous catalytic core and F(0) containing the membrane proton channel, linked together by a central stalk and a peripheral stalk. During catalysis, ATP synthesis in the catalytic domain of F(1) is coupled via a rotary mechanism of the central stalk subunits to proton translocation. Functionally, component of the F(0) channel, it forms part of the peripheral stalk, linking F(1) to F(0). The chain is ATP synthase subunit b from Shewanella loihica (strain ATCC BAA-1088 / PV-4).